A 162-amino-acid polypeptide reads, in one-letter code: Chemoreceptor glutamine deamidase CheD (162 aa).

The protein belongs to the CheD family. In terms of assembly, forms a complex with CheC.

It catalyses the reaction L-glutaminyl-[protein] + H2O = L-glutamyl-[protein] + NH4(+). Deamidates glutamine residues to glutamate on methyl-accepting chemotaxis receptors (MCPs). CheD-mediated MCP deamidation is required for productive communication of the conformational signals of the chemoreceptors to the CheA kinase. The polypeptide is Chemoreceptor glutamine deamidase CheD (Halalkalibacterium halodurans (strain ATCC BAA-125 / DSM 18197 / FERM 7344 / JCM 9153 / C-125) (Bacillus halodurans)).